Here is a 159-residue protein sequence, read N- to C-terminus: Putative pre-16S rRNA nuclease (159 aa).

It belongs to the YqgF nuclease family.

It is found in the cytoplasm. Functionally, could be a nuclease involved in processing of the 5'-end of pre-16S rRNA. The protein is Putative pre-16S rRNA nuclease of Agrobacterium fabrum (strain C58 / ATCC 33970) (Agrobacterium tumefaciens (strain C58)).